We begin with the raw amino-acid sequence, 138 residues long: Large ribosomal subunit protein uL29 (138 aa).

The interval 1–79 is large ribosomal subunit protein uL29; that stretch reads MAKSKMLDLR…TNKVIKADYN (79 aa). The segment at 80–138 is unknown; the sequence is KAVEEAEKAGKEVRAKQRKFLEEQYGQQSQTKVNEADIQKAMQAAEQETVEPDTKGETK. A disordered region spans residues 103 to 138; sequence QYGQQSQTKVNEADIQKAMQAAEQETVEPDTKGETK.

Belongs to the universal ribosomal protein uL29 family.

This is Large ribosomal subunit protein uL29 from Mycoplasma capricolum subsp. capricolum (strain California kid / ATCC 27343 / NCTC 10154).